We begin with the raw amino-acid sequence, 251 residues long: UPF0246 protein DSY0297 (251 aa).

The protein belongs to the UPF0246 family.

The sequence is that of UPF0246 protein DSY0297 from Desulfitobacterium hafniense (strain Y51).